Here is a 251-residue protein sequence, read N- to C-terminus: 16S rRNA (guanine(1405)-N(7))-methyltransferase (251 aa).

S-adenosyl-L-methionine is bound by residues tyrosine 56, 81-83 (HAS), arginine 87, alanine 111, aspartate 131, 157-158 (DV), phenylalanine 173, and glutamate 182.

The protein belongs to the methyltransferase superfamily. Aminoglycoside resistance family.

It carries out the reaction guanosine(1405) in 16S rRNA + S-adenosyl-L-methionine = N(7)-methylguanosine(1405) in 16S rRNA + S-adenosyl-L-homocysteine. In terms of biological role, specifically methylates the N(7) position of guanine 1405 in 16S rRNA. Confers resistance to various aminoglycosides, including kanamycin, tobramycin, amikacin, arbekacin, gentamicin, sisomicin and isepamicin. This Serratia marcescens protein is 16S rRNA (guanine(1405)-N(7))-methyltransferase (rmtB).